The following is a 166-amino-acid chain: Large ribosomal subunit protein eL21 (166 aa).

It belongs to the eukaryotic ribosomal protein eL21 family. In terms of assembly, component of the large ribosomal subunit.

It localises to the cytoplasm. The protein localises to the cytosol. The protein resides in the endoplasmic reticulum. Its function is as follows. Component of the large ribosomal subunit. The ribosome is a large ribonucleoprotein complex responsible for the synthesis of proteins in the cell. In Entamoeba histolytica (strain ATCC 30459 / HM-1:IMSS / ABRM), this protein is Large ribosomal subunit protein eL21 (RPL21).